Reading from the N-terminus, the 180-residue chain is Free methionine-R-sulfoxide reductase (180 aa).

The 79-residue stretch at Gly-99–Cys-177 folds into the GAF domain.

This sequence belongs to the free Met sulfoxide reductase family.

The protein resides in the cytoplasm. It localises to the nucleus. It catalyses the reaction [thioredoxin]-disulfide + L-methionine + H2O = L-methionine (R)-S-oxide + [thioredoxin]-dithiol. Catalyzes the reversible oxidation-reduction of the R-enantiomer of free methionine sulfoxide to methionine. Does not act on S-enantiomer of free methionine sulfoxide or R-enantiomer of dabsylated methionine sulfoxide. Involved in protection against oxidative stress. In Saccharomyces cerevisiae (strain ATCC 204508 / S288c) (Baker's yeast), this protein is Free methionine-R-sulfoxide reductase.